The primary structure comprises 524 residues: MDITNRQAVLKNFLGNSPDWYKLAIMGFLIINPLVFFFVSPFVAGWMLVIEFIFTLAMALKCYPLQPGGLLAIQAVAIGMTSPHQVAEEIANNLEVLLLLVFMVAGIYFMKQLLLFVFTKLLLNIRSKTILSLAFCLASAFLSAFLDALTVIAVVISVSVGFYTIYHNVTSNHSDKDITDDSGIDNQDSHETLEQFRAFLRSLMMHAGVGTALGGVMTMVGEPQNLIIAKSAGWNFADFFIRMLPVTLPVFIFGLLVCLLVEKFKLFGYGAQLPERVRQVLTEYDQQANAKRTKQEKMKLIVQAIIGVWLVLALALHLAEVGLVGLSVIILATSFCGITNEHSLGKAFQEALPFTALLTVFFAVVAVIIEQSLFTPIIQFVLQASPSAQLSLFYLFNGLLSSVSDNVFVGTVYINEARSAFEHGIVSLQQFELLAVAINTGTNLPSVATPNGQAAFLFLLTSALAPLIRLSYGRMVYMALPYTLVMTIVGLLGVEFLLVPMTEWLTQAGWISLPHITNGVAIPH.

9 helical membrane-spanning segments follow: residues 13 to 33 (FLGN…IINP), 98 to 118 (LLLV…LFVF), 140 to 160 (AFLS…SVSV), 239 to 259 (FFIR…LVCL), 304 to 324 (AIIG…VGLV), 325 to 345 (GLSV…HSLG), 358 to 378 (LTVF…TPII), 448 to 468 (ATPN…APLI), and 479 to 499 (ALPY…FLLV).

Belongs to the NhaB Na(+)/H(+) (TC 2.A.34) antiporter family.

It localises to the cell inner membrane. It carries out the reaction 2 Na(+)(in) + 3 H(+)(out) = 2 Na(+)(out) + 3 H(+)(in). In terms of biological role, na(+)/H(+) antiporter that extrudes sodium in exchange for external protons. The protein is Na(+)/H(+) antiporter NhaB of Yersinia pestis (strain Pestoides F).